The following is a 566-amino-acid chain: 5'-AMP-activated protein kinase subunit gamma-2 (566 aa).

Residues 1–198 form a disordered region; the sequence is MGSAAMDTKK…SRIYASSSPP (198 aa). The segment covering 15–25 has biased composition (low complexity); the sequence is SSPGGSSGKKN. Residues 54–64 show a composition bias toward basic and acidic residues; that stretch reads NSEKHSSRKVD. Phosphoserine occurs at positions 65, 71, 73, 90, 138, 143, 158, 161, and 162. Low complexity-rich tracts occupy residues 132 to 144 and 156 to 172; these read KESS…STSP and TSSV…VTKQ. T165 carries the post-translational modification Phosphothreonine. Positions 180-189 are enriched in basic and acidic residues; it reads YKQEPERPES. At S196 the chain carries Phosphoserine. CBS domains follow at residues 272-332, 354-412, and 427-489; these read PTSS…KSPM, TFKP…MSDM, and IGTY…NLDI. ADP is bound by residues R299, 314–319, V359, 380–381, and K399; these read MLTITD and HR. AMP contacts are provided by residues R299, 314-319, V359, H380, 380-381, K399, T429, A434, 455-456, 471-474, R498, H527, 527-528, and 543-546; these read MLTITD, HR, SA, SKFD, and SLSD. ATP is bound by residues R299, 314–319, V359, 380–381, R381, and K399; these read MLTITD and HR. Residues 367 to 388 carry the AMPK pseudosubstrate motif; that stretch reads LFDAVYSLIKNKIHRLPVIDPI. Residues 471 to 474, R498, and 527 to 528 each bind ADP; these read SKFD and HR. ATP contacts are provided by residues 471 to 474, R498, and 527 to 528; these read SKFD and HR. Residues 501–559 form the CBS 4 domain; that stretch reads YFEGVVKCSKLETLETIVDRIVRAEVHRLVVVNEADSIVGIISLSDILQALILTPAGAK.

Belongs to the 5'-AMP-activated protein kinase gamma subunit family. As to quaternary structure, AMPK is a heterotrimer of an alpha catalytic subunit (PRKAA1 or PRKAA2), a beta (PRKAB1 or PRKAB2) and a gamma non-catalytic subunits (PRKAG1, PRKAG2 or PRKAG3). Interacts with FNIP1 and FNIP2. Post-translationally, phosphorylated by ULK1; leading to negatively regulate AMPK activity and suggesting the existence of a regulatory feedback loop between ULK1 and AMPK. Glycosylated; O-GlcNAcylated by OGT, promoting the AMP-activated protein kinase (AMPK) activity.

Its function is as follows. AMP/ATP-binding subunit of AMP-activated protein kinase (AMPK), an energy sensor protein kinase that plays a key role in regulating cellular energy metabolism. In response to reduction of intracellular ATP levels, AMPK activates energy-producing pathways and inhibits energy-consuming processes: inhibits protein, carbohydrate and lipid biosynthesis, as well as cell growth and proliferation. AMPK acts via direct phosphorylation of metabolic enzymes, and by longer-term effects via phosphorylation of transcription regulators. Also acts as a regulator of cellular polarity by remodeling the actin cytoskeleton; probably by indirectly activating myosin. Gamma non-catalytic subunit mediates binding to AMP, ADP and ATP, leading to activate or inhibit AMPK: AMP-binding results in allosteric activation of alpha catalytic subunit (PRKAA1 or PRKAA2) both by inducing phosphorylation and preventing dephosphorylation of catalytic subunits. ADP also stimulates phosphorylation, without stimulating already phosphorylated catalytic subunit. ATP promotes dephosphorylation of catalytic subunit, rendering the AMPK enzyme inactive. This is 5'-AMP-activated protein kinase subunit gamma-2 (Prkag2) from Mus musculus (Mouse).